A 289-amino-acid chain; its full sequence is MQSPRRNAEGRPLGTCDPSSSGSPAHGGGSRFEFQSLLSSRMPGADPTSARLRASESPVHRRGSFPLAGAGSSQALPPQLPEEDRIDLNPSFLGIALRSLLAIDLWLSKKLGVCAGESSSWGSMRPLMKLLEISGHGIPWLLGTLYCLSRSDSWAGREVLMNLLFALLLDLLLVSLIKGLVRRRRPAHNQMDMFFTISVDKYSFPSGHTTRAALVSRFILNHLVLAIPLRVLVVLWAFILGLSRVMLGRHNVTDVAFGFFLGYMQYSIVDYCWLSPRTAPVLFVLWNQP.

The tract at residues 1–81 is disordered; it reads MQSPRRNAEG…SSQALPPQLP (81 aa). Residues 1–126 lie on the Cytoplasmic side of the membrane; sequence MQSPRRNAEG…ESSSWGSMRP (126 aa). Phosphoserine is present on residues Ser23, Ser30, and Ser64. A helical membrane pass occupies residues 127–147; sequence LMKLLEISGHGIPWLLGTLYC. Residues 148-158 lie on the Lumenal side of the membrane; sequence LSRSDSWAGRE. The helical transmembrane segment at 159 to 179 threads the bilayer; sequence VLMNLLFALLLDLLLVSLIKG. Residues 178–186 are phosphatase sequence motif I; the sequence is KGLVRRRRP. At 180 to 222 the chain is on the cytoplasmic side; the sequence is LVRRRRPAHNQMDMFFTISVDKYSFPSGHTTRAALVSRFILNH. Residues 205–208 form a phosphatase sequence motif II region; sequence PSGH. His208 serves as the catalytic Proton donors. Residues 223 to 243 traverse the membrane as a helical segment; it reads LVLAIPLRVLVVLWAFILGLS. The segment at 243 to 254 is phosphatase sequence motif III; it reads SRVMLGRHNVTD. Residues 244–254 lie on the Lumenal side of the membrane; that stretch reads RVMLGRHNVTD. Catalysis depends on His250, which acts as the Nucleophile. A helical membrane pass occupies residues 255–275; sequence VAFGFFLGYMQYSIVDYCWLS. At 276–289 the chain is on the cytoplasmic side; that stretch reads PRTAPVLFVLWNQP.

Belongs to the PA-phosphatase related phosphoesterase family. Post-translationally, phosphorylation by PKC activates the phosphatase activity towards presqualene diphosphate.

The protein localises to the endoplasmic reticulum membrane. It is found in the nucleus envelope. It localises to the nucleus inner membrane. The catalysed reaction is presqualene diphosphate + H2O = presqualene phosphate + phosphate + H(+). The enzyme catalyses presqualene phosphate + H2O = presqualene alcohol + phosphate. It catalyses the reaction (2E,6E)-farnesyl diphosphate + H2O = (2E,6E)-farnesyl phosphate + phosphate + H(+). It carries out the reaction (2E,6E)-farnesyl phosphate + H2O = (2E,6E)-farnesol + phosphate. The catalysed reaction is (2E,6E,10E)-geranylgeranyl diphosphate + H2O = (2E,6E,10E)-geranylgeranyl phosphate + phosphate + H(+). The enzyme catalyses (2E,6E,10E)-geranylgeranyl phosphate + H2O = (2E,6E,10E)-geranylgeraniol + phosphate. It catalyses the reaction (2E)-geranyl diphosphate + H2O = (2E)-geranyl phosphate + phosphate + H(+). It carries out the reaction (2E)-geranyl phosphate + H2O = (2E)-geraniol + phosphate. The catalysed reaction is 1,2-dihexadecanoyl-sn-glycero-3-phosphate + H2O = 1,2-dihexadecanoyl-sn-glycerol + phosphate. Magnesium-independent polyisoprenoid diphosphatase that catalyzes the sequential dephosphorylation of presqualene, farnesyl, geranyl and geranylgeranyl diphosphates. Functions in the innate immune response through the dephosphorylation of presqualene diphosphate which acts as a potent inhibitor of the signaling pathways contributing to polymorphonuclear neutrophils activation. May regulate the biosynthesis of cholesterol and related sterols by dephosphorylating presqualene and farnesyl diphosphate, two key intermediates in this biosynthetic pathway. May also play a role in protein prenylation by acting on farnesyl diphosphate and its derivative geranylgeranyl diphosphate, two precursors for the addition of isoprenoid anchors to membrane proteins. Has a lower activity towards phosphatidic acid (PA), but through phosphatidic acid dephosphorylation may participate in the biosynthesis of phospholipids and triacylglycerols. May also act on ceramide-1-P, lysophosphatidic acid (LPA) and sphing-4-enine 1-phosphate/sphingosine-1-phosphate. The protein is Polyisoprenoid diphosphate/phosphate phosphohydrolase PLPP6 of Bos taurus (Bovine).